A 193-amino-acid polypeptide reads, in one-letter code: Putative anthranilate synthase component II (193 aa).

Positions 2-193 (KLLIINNHDS…WLAIPPTTNP (192 aa)) constitute a Glutamine amidotransferase type-1 domain. Residues C78, H168, and E170 contribute to the active site.

As to quaternary structure, tetramer of two components I and two components II.

The enzyme catalyses chorismate + L-glutamine = anthranilate + pyruvate + L-glutamate + H(+). The protein operates within amino-acid biosynthesis; L-tryptophan biosynthesis; L-tryptophan from chorismate: step 1/5. The chain is Putative anthranilate synthase component II from Haemophilus influenzae (strain ATCC 51907 / DSM 11121 / KW20 / Rd).